Reading from the N-terminus, the 234-residue chain is MAEPGPEPGRAWRVLALCGVAVFLAAAAAGGALVAWNLAASAARGPRCPEPGANATAPPGDPPPGVDDLRRRLAEAAEREEALARQLDQAESIRHELEKALKACEGRQSRLQTQLTTLKIEMDEAKAQGTQMGAENGALTEALARWEAAATESTRRLDEALRRAGVAEAEGEACAAREAALRERLNVLEAEMSPQRRVPRPRPRSGSRPRPSPRSRSRSGPSGGCRRPARRARG.

A signal peptide spans 1–42 (MAEPGPEPGRAWRVLALCGVAVFLAAAAAGGALVAWNLAASA). Disordered regions lie at residues 44 to 67 (RGPR…PGVD) and 187 to 234 (VLEA…RARG). Positions 66 to 163 (VDDLRRRLAE…TRRLDEALRR (98 aa)) form a coiled coil. The span at 187 to 196 (VLEAEMSPQR) shows a compositional bias: low complexity. Residues 197–217 (RVPRPRPRSGSRPRPSPRSRS) show a composition bias toward basic residues.

In Homo sapiens (Human), this protein is Coiled-coil domain-containing protein 194.